A 465-amino-acid polypeptide reads, in one-letter code: Asparagine--tRNA ligase (465 aa).

Belongs to the class-II aminoacyl-tRNA synthetase family. As to quaternary structure, homodimer.

It localises to the cytoplasm. It carries out the reaction tRNA(Asn) + L-asparagine + ATP = L-asparaginyl-tRNA(Asn) + AMP + diphosphate + H(+). The chain is Asparagine--tRNA ligase from Clostridium perfringens (strain ATCC 13124 / DSM 756 / JCM 1290 / NCIMB 6125 / NCTC 8237 / Type A).